Here is a 417-residue protein sequence, read N- to C-terminus: Arginine biosynthesis bifunctional protein ArgJ (417 aa).

Substrate is bound by residues Thr162, Lys188, Thr199, Glu289, Asn412, and Ser417. Thr199 acts as the Nucleophile in catalysis.

It belongs to the ArgJ family. In terms of assembly, heterotetramer of two alpha and two beta chains.

Its subcellular location is the cytoplasm. The enzyme catalyses N(2)-acetyl-L-ornithine + L-glutamate = N-acetyl-L-glutamate + L-ornithine. It carries out the reaction L-glutamate + acetyl-CoA = N-acetyl-L-glutamate + CoA + H(+). The protein operates within amino-acid biosynthesis; L-arginine biosynthesis; L-ornithine and N-acetyl-L-glutamate from L-glutamate and N(2)-acetyl-L-ornithine (cyclic): step 1/1. It functions in the pathway amino-acid biosynthesis; L-arginine biosynthesis; N(2)-acetyl-L-ornithine from L-glutamate: step 1/4. Functionally, catalyzes two activities which are involved in the cyclic version of arginine biosynthesis: the synthesis of N-acetylglutamate from glutamate and acetyl-CoA as the acetyl donor, and of ornithine by transacetylation between N(2)-acetylornithine and glutamate. The polypeptide is Arginine biosynthesis bifunctional protein ArgJ (Nitrobacter winogradskyi (strain ATCC 25391 / DSM 10237 / CIP 104748 / NCIMB 11846 / Nb-255)).